The sequence spans 176 residues: Disulfide bond formation protein B (176 aa).

Residues 1-11 lie on the Cytoplasmic side of the membrane; it reads MLQLTTYRNLQ. A helical transmembrane segment spans residues 12-28; the sequence is VFLVIMTAIGMSFALFF. Topologically, residues 29-46 are periplasmic; that stretch reads LQRYMGFSPCPLCIFQRI. Residues Cys38 and Cys41 are joined by a disulfide bond. The chain crosses the membrane as a helical span at residues 47-63; that stretch reads GLMIMGGFALIAALFHP. Topologically, residues 64–70 are cytoplasmic; sequence KSMVIRL. The chain crosses the membrane as a helical span at residues 71 to 88; that stretch reads LLWLGSLAGIGWAAIVAG. Residues 89–145 lie on the Periplasmic side of the membrane; it reads RHVWLQHLPADQVPSCGPGLDYWLDTLPMQQVLKEVFAGSGECASIDWTFLGLSIPE. A disulfide bond links Cys104 and Cys131. Residues 146–164 traverse the membrane as a helical segment; that stretch reads QSLILFSILILTHLLILWR. The Cytoplasmic portion of the chain corresponds to 165 to 176; the sequence is IVRPATPKPLAR.

This sequence belongs to the DsbB family.

The protein resides in the cell inner membrane. Functionally, required for disulfide bond formation in some periplasmic proteins. Acts by oxidizing the DsbA protein. The polypeptide is Disulfide bond formation protein B (Psychrobacter cryohalolentis (strain ATCC BAA-1226 / DSM 17306 / VKM B-2378 / K5)).